A 471-amino-acid polypeptide reads, in one-letter code: UDP-N-acetylmuramate--L-alanine ligase (471 aa).

122–128 (GTHGKTT) serves as a coordination point for ATP.

Belongs to the MurCDEF family.

It is found in the cytoplasm. The catalysed reaction is UDP-N-acetyl-alpha-D-muramate + L-alanine + ATP = UDP-N-acetyl-alpha-D-muramoyl-L-alanine + ADP + phosphate + H(+). It participates in cell wall biogenesis; peptidoglycan biosynthesis. Cell wall formation. The sequence is that of UDP-N-acetylmuramate--L-alanine ligase from Cutibacterium acnes (strain DSM 16379 / KPA171202) (Propionibacterium acnes).